The sequence spans 317 residues: Olfactory receptor 2B11 (317 aa).

Residues 1–29 (MKSDNHSFLGDSPKAFILLGVSDRPWLEL) lie on the Extracellular side of the membrane. Residue Asn-5 is glycosylated (N-linked (GlcNAc...) asparagine). A helical transmembrane segment spans residues 30–53 (PLFVVLLLSYVLAMLGNVAIILAS). At 54–61 (RVDPQLHS) the chain is on the cytoplasmic side. Residues 62-83 (PMYIFLSHLSFLDLCYTTTTVP) form a helical membrane-spanning segment. The Extracellular portion of the chain corresponds to 84 to 104 (QMLVNMGSSQKTISYGGCTVQ). Cys-101 and Cys-193 are disulfide-bonded. A helical membrane pass occupies residues 105-124 (YAVFHWLGCTECIVLAAMAL). At 125–143 (DRYVAICKPLHYAVLMHRA) the chain is on the cytoplasmic side. The helical transmembrane segment at 144–162 (LCQQLVALAWLSGFGNSFV) threads the bilayer. Residues 163 to 199 (QVVLTVQLPFCGRQVLNNFFCEVPAVIKLSCADTAVN) lie on the Extracellular side of the membrane. Asn-199 carries an N-linked (GlcNAc...) asparagine glycan. Residues 200–223 (DTILAVLVAFFVLVPLALILLSYG) form a helical membrane-spanning segment. The Cytoplasmic segment spans residues 224–240 (FIARAVLRIQSSKGRHK). Residues 241–263 (AFGTCSSHLMIVSLFYLPAIYMY) form a helical membrane-spanning segment. Residues 264–276 (LQPPSSYSQEQGK) lie on the Extracellular side of the membrane. A helical transmembrane segment spans residues 277–296 (FISLFYSIITPTLNPFTYTL). Over 297–317 (RNKDMKGALRRLLARIWRLCG) the chain is Cytoplasmic.

The protein belongs to the G-protein coupled receptor 1 family.

Its subcellular location is the cell membrane. In terms of biological role, odorant receptor. This Homo sapiens (Human) protein is Olfactory receptor 2B11 (OR2B11).